We begin with the raw amino-acid sequence, 674 residues long: Xaa-Pro aminopeptidase 2 (674 aa).

The signal sequence occupies residues 1–22 (MAQAYWQCYPWLVLLCACAWSY). An N-linked (GlcNAc...) asparagine glycan is attached at asparagine 65. Substrate is bound at residue arginine 116. N-linked (GlcNAc...) asparagine glycans are attached at residues asparagine 270, asparagine 278, and asparagine 293. Histidine 430 lines the substrate pocket. Zn(2+)-binding residues include aspartate 450, aspartate 461, and histidine 524. Positions 524, 533, and 555 each coordinate substrate. The Zn(2+) site is built by glutamate 555 and glutamate 569. Alanine 650 is lipidated: GPI-anchor amidated alanine. A propeptide spans 651–674 (RAPHIISWTSLWVASALAILSWSS) (removed in mature form).

This sequence belongs to the peptidase M24B family. In terms of assembly, homotrimer. Requires Zn(2+) as cofactor. N-glycosylated. In terms of tissue distribution, strongly expressed in small intestine, heart and lung. Also detected in testis, skeletal muscle, spleen, liver, kidney, brain, uterus, eye, lymph node, thymus, stomach, prostate and bone marrow.

Its subcellular location is the cell membrane. The catalysed reaction is Release of any N-terminal amino acid, including proline, that is linked to proline, even from a dipeptide or tripeptide.. Functionally, membrane-bound metalloprotease which catalyzes the removal of a penultimate prolyl residue from the N-termini of peptides, such as Arg-Pro-Pro. May play a role in the metabolism of the vasodilator bradykinin. This Mus musculus (Mouse) protein is Xaa-Pro aminopeptidase 2.